The chain runs to 103 residues: Large ribosomal subunit protein bL21 (103 aa).

Belongs to the bacterial ribosomal protein bL21 family. As to quaternary structure, part of the 50S ribosomal subunit. Contacts protein L20.

This protein binds to 23S rRNA in the presence of protein L20. The sequence is that of Large ribosomal subunit protein bL21 from Clostridium beijerinckii (strain ATCC 51743 / NCIMB 8052) (Clostridium acetobutylicum).